We begin with the raw amino-acid sequence, 376 residues long: Putative peptide import ATP-binding protein BMEII0205 (376 aa).

The tract at residues 1-25 is disordered; it reads MPLRPALHLRTGKLRQTPTHNEPDG. The region spanning 64–314 is the ABC transporter domain; it reads VRTDDLVRDF…PLHPYSRALL (251 aa). Residue 106–113 participates in ATP binding; the sequence is GESGSGKS.

Belongs to the ABC transporter superfamily. In terms of assembly, the complex is composed of two ATP-binding proteins (BMEII0205 and BMEII0206), two transmembrane proteins (BMEII0207/BMEII0208 and BMEII0209) and a solute-binding protein (BMEII0210).

Its subcellular location is the cell inner membrane. Functionally, probably part of an ABC transporter complex that could be involved in peptide import. Probably responsible for energy coupling to the transport system. The sequence is that of Putative peptide import ATP-binding protein BMEII0205 from Brucella melitensis biotype 1 (strain ATCC 23456 / CCUG 17765 / NCTC 10094 / 16M).